The sequence spans 124 residues: Small ribosomal subunit protein uS12 (124 aa).

Positions 1–20 (MATISQLVRNPRKDKVQKTS) are disordered. Residue aspartate 89 is modified to 3-methylthioaspartic acid. Residues 104–124 (TSGVTARRKGRSKYGAKRPKA) are disordered. A compositionally biased stretch (basic residues) spans 109 to 124 (ARRKGRSKYGAKRPKA).

This sequence belongs to the universal ribosomal protein uS12 family. As to quaternary structure, part of the 30S ribosomal subunit. Contacts proteins S8 and S17. May interact with IF1 in the 30S initiation complex.

In terms of biological role, with S4 and S5 plays an important role in translational accuracy. Interacts with and stabilizes bases of the 16S rRNA that are involved in tRNA selection in the A site and with the mRNA backbone. Located at the interface of the 30S and 50S subunits, it traverses the body of the 30S subunit contacting proteins on the other side and probably holding the rRNA structure together. The combined cluster of proteins S8, S12 and S17 appears to hold together the shoulder and platform of the 30S subunit. The polypeptide is Small ribosomal subunit protein uS12 (Psychromonas ingrahamii (strain DSM 17664 / CCUG 51855 / 37)).